The sequence spans 529 residues: [Pyruvate dehydrogenase [acetyl-transferring]]-phosphatase 2, mitochondrial (529 aa).

The N-terminal 66 residues, 1 to 66, are a transit peptide targeting the mitochondrion; sequence MSSTVSYWIL…FTLCKAYRHT (66 aa). The region spanning 106-517 is the PPM-type phosphatase domain; it reads VLRFESNQLA…DDITVTVVYF (412 aa). Mn(2+)-binding residues include aspartate 141, glycine 142, aspartate 412, and aspartate 508.

The protein belongs to the PP2C family. It depends on Mg(2+) as a cofactor.

It is found in the mitochondrion. The enzyme catalyses O-phospho-L-seryl-[pyruvate dehydrogenase E1 alpha subunit] + H2O = L-seryl-[pyruvate dehydrogenase E1 alpha subunit] + phosphate. Functionally, mitochondrial enzyme that catalyzes the dephosphorylation and concomitant reactivation of the alpha subunit of the E1 component of the pyruvate dehydrogenase complex (PDC), thereby stimulating the conversion of pyruvate into acetyl-CoA. Acts as a crucial regulator of T cell metabolism and function, with a particular focus on T-helper Th17. The sequence is that of [Pyruvate dehydrogenase [acetyl-transferring]]-phosphatase 2, mitochondrial from Homo sapiens (Human).